The primary structure comprises 337 residues: 2-ketoarginine methyltransferase (337 aa).

This sequence belongs to the 2-ketoarginine methyltransferase family.

The enzyme catalyses 5-guanidino-2-oxopentanoate + S-adenosyl-L-methionine = (3R)-5-guanidino-3-methyl-2-oxopentanoate + S-adenosyl-L-homocysteine + H(+). It functions in the pathway antibiotic biosynthesis. Its function is as follows. S-adenosyl-L-methionine-dependent methyltransferase involved in the formation of the rare amino acid 3-methylarginine (MeArg), which is incorporated into the peptidyl nucleoside antibiotic arginomycin. Transfers the methyl group from S-adenosyl-L-methionine into 5-guanidino-2-oxopentanoate acid to yield 5-guanidino-3-methyl-2-oxopentanoate, a precursor of MeArg. The polypeptide is 2-ketoarginine methyltransferase (Streptomyces arginensis).